We begin with the raw amino-acid sequence, 336 residues long: Eukaryotic translation initiation factor 3 subunit H (336 aa).

In terms of domain architecture, MPN spans 21 to 154; sequence VQCDGLAAMK…LKAYRLTPQA (134 aa).

Belongs to the eIF-3 subunit H family. In terms of assembly, component of the eukaryotic translation initiation factor 3 (eIF-3) complex.

Its subcellular location is the cytoplasm. Component of the eukaryotic translation initiation factor 3 (eIF-3) complex, which is involved in protein synthesis of a specialized repertoire of mRNAs and, together with other initiation factors, stimulates binding of mRNA and methionyl-tRNAi to the 40S ribosome. The eIF-3 complex specifically targets and initiates translation of a subset of mRNAs involved in cell proliferation. In Aedes aegypti (Yellowfever mosquito), this protein is Eukaryotic translation initiation factor 3 subunit H.